The following is a 370-amino-acid chain: Proline-rich protein 5-like (370 aa).

Phosphoserine is present on Ser28. Disordered regions lie at residues 312 to 346 (LGEE…LDSP) and 351 to 370 (LEDV…ASLS).

The protein belongs to the PROTOR family. As to quaternary structure, interacts with the mammalian target of rapamycin complex 2 (mTORC2) which contains MTOR, MLST8, PRR5, RICTOR, MAPKAP1 and DEPTOR. Interacts with RFFL. Interacts (via C-terminus) with ZFP36 (via C-terminus); this interaction may accelerate ZFP36-mediated mRNA decay during stress. Interacts with RICTOR. Post-translationally, ubiquitinated. Ubiquitination by RFFL promotes proteasomal degradation of PRR5L thereby modifying the substrate-specific activity of the mTORC2 complex. Ubiquitination by RFFL is stimulated by LPA/lysophosphatidic acid.

Functionally, associates with the mTORC2 complex that regulates cellular processes including survival and organization of the cytoskeleton. Regulates the activity of the mTORC2 complex in a substrate-specific manner preventing for instance the specific phosphorylation of PKCs and thereby controlling cell migration. Plays a role in the stimulation of ZFP36-mediated mRNA decay of several ZFP36-associated mRNAs, such as TNF-alpha and GM-CSF, in response to stress. Required for ZFP36 localization to cytoplasmic stress granule (SG) and P-body (PB) in response to stress. In Mus musculus (Mouse), this protein is Proline-rich protein 5-like (Prr5l).